Reading from the N-terminus, the 402-residue chain is tRNA(Met) cytidine acetate ligase (402 aa).

ATP is bound by residues 7–20, Gly102, Asn171, and Arg196; that span reads ITEY…HELH.

It belongs to the TmcAL family.

The protein resides in the cytoplasm. It carries out the reaction cytidine(34) in elongator tRNA(Met) + acetate + ATP = N(4)-acetylcytidine(34) in elongator tRNA(Met) + AMP + diphosphate. In terms of biological role, catalyzes the formation of N(4)-acetylcytidine (ac(4)C) at the wobble position of elongator tRNA(Met), using acetate and ATP as substrates. First activates an acetate ion to form acetyladenylate (Ac-AMP) and then transfers the acetyl group to tRNA to form ac(4)C34. This is tRNA(Met) cytidine acetate ligase from Clostridium perfringens (strain SM101 / Type A).